The primary structure comprises 114 residues: Putative small ubiquitin-related modifier 4 (114 aa).

Residues 1-20 (MSTTSRVGSNEVKMEGQKRK) form a disordered region. A Ubiquitin-like domain is found at 26 to 104 (THVTLKVKGQ…IDAMLCQQSG (79 aa)). A Glycyl lysine isopeptide (Gly-Lys) (interchain with K-? in acceptor proteins) cross-link involves residue Gly-104.

The protein belongs to the ubiquitin family. SUMO subfamily. In terms of assembly, interacts with SAE2, SCE1, SIZ1 and MMS21 Covalently attached to a number of proteins.

The protein resides in the nucleus. It is found in the cytoplasm. Functionally, ubiquitin-like protein which can be covalently attached to target lysines as a monomer. Does not seem to be involved in protein degradation and may function as an antagonist of ubiquitin in the degradation process. In Arabidopsis thaliana (Mouse-ear cress), this protein is Putative small ubiquitin-related modifier 4 (SUMO4).